The following is a 135-amino-acid chain: Sex-regulated protein janus-A (135 aa).

Substrate is bound at residue Lys37. Residue His63 is the Proton acceptor of the active site. Ser104–Gly106 lines the substrate pocket.

This sequence belongs to the janus family.

Functionally, janA and janB regulate somatic sex differentiation. This is Sex-regulated protein janus-A (janA) from Drosophila erecta (Fruit fly).